The chain runs to 429 residues: Adenylosuccinate synthetase (429 aa).

GTP is bound by residues 12–18 (GDEGKGK) and 40–42 (GHT). Asp-13 acts as the Proton acceptor in catalysis. The Mg(2+) site is built by Asp-13 and Gly-40. IMP contacts are provided by residues 13–16 (DEGK), 38–41 (NAGH), Thr-129, Arg-143, Gln-223, Thr-238, and Arg-302. The active-site Proton donor is the His-41. 298 to 304 (VVTGRKR) provides a ligand contact to substrate. Residues Arg-304, 330–332 (KLD), and 412–414 (STS) contribute to the GTP site.

This sequence belongs to the adenylosuccinate synthetase family. As to quaternary structure, homodimer. Requires Mg(2+) as cofactor.

It is found in the cytoplasm. The catalysed reaction is IMP + L-aspartate + GTP = N(6)-(1,2-dicarboxyethyl)-AMP + GDP + phosphate + 2 H(+). It participates in purine metabolism; AMP biosynthesis via de novo pathway; AMP from IMP: step 1/2. In terms of biological role, plays an important role in the de novo pathway of purine nucleotide biosynthesis. Catalyzes the first committed step in the biosynthesis of AMP from IMP. This Bartonella henselae (strain ATCC 49882 / DSM 28221 / CCUG 30454 / Houston 1) (Rochalimaea henselae) protein is Adenylosuccinate synthetase.